Here is an 86-residue protein sequence, read N- to C-terminus: Large ribosomal subunit protein uL23c (86 aa).

Belongs to the universal ribosomal protein uL23 family. Part of the 50S ribosomal subunit.

It is found in the plastid. The protein resides in the chloroplast. In terms of biological role, binds to 23S rRNA. This chain is Large ribosomal subunit protein uL23c (rpl23), found in Chlorella vulgaris (Green alga).